The sequence spans 429 residues: MSGGVYGGDEVGALVFDIGSYTVRAGYAGEDCPKVDFPTAIGVVLERDDGSTMMEIDGDKGKQGGPTYYIDTNALRVPRENMEAISPLKNGMVEDWDSFQAILDHTYKMHVKSEASLHPVLMSEAPWNTRAKREKLTELMFEHYSIPAFFLCKTAVLTAFANGRSTGLILDSGATHTTAIPVHDGYVLQQGIVKSPLAGDFITMQCRELFQEMNIELIPPYMIASKEAVREGSPANWKRKEKLPQVTRSWHNYMCNCVIQDFQASVLQVSDSTYDEQVAAQMPTVHYEFPNGYNCDFGAERLKIPEGLFDPSNVKGLSGNTMLGVSHVVTTSVGMCDIDIRPGLYGSVIVAGGNTLIQSFTDRLNRELSQKTPPSMRLKLIANNTTVERRFSSWIGGSILASLGTFQQMWISKQEYEEGGKQCVERKCP.

The residue at position 2 (Ser2) is an N-acetylserine. Lys62 is covalently cross-linked (Glycyl lysine isopeptide (Lys-Gly) (interchain with G-Cter in SUMO2)). Ser86 and Ser233 each carry phosphoserine.

Belongs to the actin family. In terms of assembly, component of numerous complexes with chromatin remodeling and histone acetyltransferase activity. Component of the NuA4 histone acetyltransferase complex which contains the catalytic subunit KAT5/TIP60 and the subunits EP400, TRRAP/PAF400, BRD8/SMAP, EPC1, DMAP1/DNMAP1, RUVBL1/TIP49, RUVBL2, ING3, actin, ACTL6A/BAF53A, MORF4L1/MRG15, MORF4L2/MRGX, MRGBP, YEATS4/GAS41, VPS72/YL1 and MEAF6. The NuA4 complex interacts with MYC and the adenovirus E1A protein. Component of a NuA4-related complex which contains EP400, TRRAP/PAF400, SRCAP, BRD8/SMAP, EPC1, DMAP1/DNMAP1, RUVBL1/TIP49, RUVBL2, actin, ACTL6A/BAF53A, VPS72 and YEATS4/GAS41. Component of the multiprotein chromatin-remodeling complexes SWI/SNF: SWI/SNF-A (BAF), SWI/SNF-B (PBAF) and related complexes. The canonical complex contains a catalytic subunit (either SMARCA4/BRG1/BAF190A or SMARCA2/BRM/BAF190B) and at least SMARCE1, ACTL6A/BAF53, SMARCC1/BAF155, SMARCC2/BAF170, and SMARCB1/SNF5/BAF47. Other subunits specific to each of the complexes may also be present permitting several possible combinations developmentally and tissue specific. Component of the BAF complex, which includes at least actin (ACTB), ARID1A/BAF250A, ARID1B/BAF250B, SMARCA2/BRM, SMARCA4/BRG1/BAF190A, ACTL6A/BAF53, ACTL6B/BAF53B, SMARCE1/BAF57, SMARCC1/BAF155, SMARCC2/BAF170, SMARCB1/SNF5/INI1, and one or more SMARCD1/BAF60A, SMARCD2/BAF60B, or SMARCD3/BAF60C. In muscle cells, the BAF complex also contains DPF3. Component of the BAF53 complex, at least composed of ACTL6A/BAF53A, RUVBL1/TIP49, SMARCA2/BRM/BAF190B and TRRAP/PAF400, and which may also include a HAT activity related to, but distinct from, that of KAT5. Component of neural progenitors-specific chromatin remodeling complex (npBAF complex) composed of at least, ARID1A/BAF250A or ARID1B/BAF250B, SMARCD1/BAF60A, SMARCD3/BAF60C, SMARCA2/BRM/BAF190B, SMARCA4/BRG1/BAF190A, SMARCB1/BAF47, SMARCC1/BAF155, SMARCE1/BAF57, SMARCC2/BAF170, PHF10/BAF45A, ACTL6A/BAF53A and actin. Component of SWI/SNF (GBAF) subcomplex, which includes at least BICRA or BICRAL (mutually exclusive), BRD9, SS18, SMARCA2/BRM, SMARCA4/BRG1/BAF190A, ACTL6A/BAF53, SMARCC1/BAF155, and SMARCD1/BAF60A. May be a component of the SWI/SNF-B (PBAF) chromatin remodeling complex, at least composed of SMARCA4/BRG1, SMARCB1/BAF47/SNF5, ACTL6A/BAF53A or ACTL6B/BAF53B, SMARCE1/BAF57, SMARCD1/BAF60A, SMARCD2/BAF60B, perhaps SMARCD3/BAF60C, SMARCC1/BAF155, SMARCC2/BAF170, PBRM1/BAF180, ARID2/BAF200 and actin. Interacts with SMARCA4/BRG1/BAF190A. Interacts with PHF10/BAF45A. Component of the chromatin remodeling INO80 complex; specifically part of a complex module associated with the DBINO domain of INO80. Interacts with DPF2. In terms of tissue distribution, widely expressed. Expressed selectively in neural stem and progenitor cells (at protein level).

The protein resides in the nucleus. In terms of biological role, involved in transcriptional activation and repression of select genes by chromatin remodeling (alteration of DNA-nucleosome topology). Component of SWI/SNF chromatin remodeling complexes that carry out key enzymatic activities, changing chromatin structure by altering DNA-histone contacts within a nucleosome in an ATP-dependent manner. Required for maximal ATPase activity of SMARCA4/BRG1/BAF190A and for association of the SMARCA4/BRG1/BAF190A containing remodeling complex BAF with chromatin/nuclear matrix. Belongs to the neural progenitors-specific chromatin remodeling complex (npBAF complex) and is required for the proliferation of neural progenitors. During neural development a switch from a stem/progenitor to a postmitotic chromatin remodeling mechanism occurs as neurons exit the cell cycle and become committed to their adult state. The transition from proliferating neural stem/progenitor cells to postmitotic neurons requires a switch in subunit composition of the npBAF and nBAF complexes. As neural progenitors exit mitosis and differentiate into neurons, npBAF complexes which contain ACTL6A/BAF53A and PHF10/BAF45A, are exchanged for homologous alternative ACTL6B/BAF53B and DPF1/BAF45B or DPF3/BAF45C subunits in neuron-specific complexes (nBAF). The npBAF complex is essential for the self-renewal/proliferative capacity of the multipotent neural stem cells. The nBAF complex along with CREST plays a role regulating the activity of genes essential for dendrite growth. Component of the NuA4 histone acetyltransferase (HAT) complex which is involved in transcriptional activation of select genes principally by acetylation of nucleosomal histones H4 and H2A. This modification may both alter nucleosome - DNA interactions and promote interaction of the modified histones with other proteins which positively regulate transcription. This complex may be required for the activation of transcriptional programs associated with oncogene and proto-oncogene mediated growth induction, tumor suppressor mediated growth arrest and replicative senescence, apoptosis, and DNA repair. NuA4 may also play a direct role in DNA repair when recruited to sites of DNA damage. Putative core component of the chromatin remodeling INO80 complex which is involved in transcriptional regulation, DNA replication and probably DNA repair. This Mus musculus (Mouse) protein is Actin-like protein 6A (Actl6a).